The following is a 630-amino-acid chain: Putative lipase atg15 (630 aa).

The Cytoplasmic portion of the chain corresponds to 1–20; it reads MKSSQRRIKRHAMRDMSIST. A helical; Signal-anchor for type II membrane protein membrane pass occupies residues 21-40; sequence LLLSVVLLPSVVSANDHVYF. Over 41-630 the chain is Lumenal; the sequence is NPPSPGSPFL…WGSDIEHYEI (590 aa). Asparagine 200, asparagine 222, asparagine 280, and asparagine 304 each carry an N-linked (GlcNAc...) asparagine glycan. The active-site Charge relay system is the serine 320. A glycan (N-linked (GlcNAc...) asparagine) is linked at asparagine 466. The segment covering 577-589 has biased composition (polar residues); the sequence is SVTAPPFSTSTSS. The disordered stretch occupies residues 577-599; it reads SVTAPPFSTSTSSDHVRADHSIG.

This sequence belongs to the AB hydrolase superfamily. Lipase family. In terms of assembly, binds to both phosphatidylinositol (PI) and phosphatidylinositol 3,5-bisphosphate (PIP2).

The protein localises to the endosome. It is found in the multivesicular body membrane. The protein resides in the prevacuolar compartment membrane. The enzyme catalyses a triacylglycerol + H2O = a diacylglycerol + a fatty acid + H(+). In terms of biological role, lipase which is essential for lysis of subvacuolar cytoplasm to vacuole targeted bodies and intravacuolar autophagic bodies. Involved in the lysis of intravacuolar multivesicular body (MVB) vesicles. The intravacuolar membrane disintegration by atg15 is critical to life span extension. The sequence is that of Putative lipase atg15 (atg15) from Aspergillus clavatus (strain ATCC 1007 / CBS 513.65 / DSM 816 / NCTC 3887 / NRRL 1 / QM 1276 / 107).